The primary structure comprises 145 residues: Ribonuclease H (145 aa).

In terms of domain architecture, RNase H type-1 spans 1-142 (MKEVVIYTDG…CDEIARSMIK (142 aa)). 4 residues coordinate Mg(2+): aspartate 9, glutamate 47, aspartate 69, and aspartate 134.

The protein belongs to the RNase H family. As to quaternary structure, monomer. It depends on Mg(2+) as a cofactor.

The protein resides in the cytoplasm. It catalyses the reaction Endonucleolytic cleavage to 5'-phosphomonoester.. Functionally, endonuclease that specifically degrades the RNA of RNA-DNA hybrids. This Caldicellulosiruptor saccharolyticus (strain ATCC 43494 / DSM 8903 / Tp8T 6331) protein is Ribonuclease H.